We begin with the raw amino-acid sequence, 234 residues long: Sugar fermentation stimulation protein A (234 aa).

Residues 201-220 (LLSEAQNKGVEVLAYKAELS) constitute a DNA-binding region (H-T-H motif).

The protein belongs to the SfsA family.

Binds to DNA non-specifically. Could be a regulatory factor involved in maltose metabolism. This is Sugar fermentation stimulation protein A from Salmonella choleraesuis (strain SC-B67).